A 410-amino-acid polypeptide reads, in one-letter code: Lipoyl synthase, mitochondrial (410 aa).

The N-terminal 29 residues, 1-29, are a transit peptide targeting the mitochondrion; sequence MASTTVCSAARIRVASSQVLRSIANTRTY. The span at 29-39 shows a compositional bias: polar residues; that stretch reads YATTSPESSIP. The segment at 29–49 is disordered; that stretch reads YATTSPESSIPETKPTAKRTP. [4Fe-4S] cluster contacts are provided by Cys129, Cys134, Cys140, Cys160, Cys164, Cys167, and Ser375. Positions 143-364 constitute a Radical SAM core domain; sequence GGSKAAATAT…KEKAMEMGFL (222 aa).

The protein belongs to the radical SAM superfamily. Lipoyl synthase family. [4Fe-4S] cluster serves as cofactor.

The protein resides in the mitochondrion. The catalysed reaction is [[Fe-S] cluster scaffold protein carrying a second [4Fe-4S](2+) cluster] + N(6)-octanoyl-L-lysyl-[protein] + 2 oxidized [2Fe-2S]-[ferredoxin] + 2 S-adenosyl-L-methionine + 4 H(+) = [[Fe-S] cluster scaffold protein] + N(6)-[(R)-dihydrolipoyl]-L-lysyl-[protein] + 4 Fe(3+) + 2 hydrogen sulfide + 2 5'-deoxyadenosine + 2 L-methionine + 2 reduced [2Fe-2S]-[ferredoxin]. It functions in the pathway protein modification; protein lipoylation via endogenous pathway; protein N(6)-(lipoyl)lysine from octanoyl-[acyl-carrier-protein]: step 2/2. Catalyzes the radical-mediated insertion of two sulfur atoms into the C-6 and C-8 positions of the octanoyl moiety bound to the lipoyl domains of lipoate-dependent enzymes, thereby converting the octanoylated domains into lipoylated derivatives. The polypeptide is Lipoyl synthase, mitochondrial (Arthroderma otae (strain ATCC MYA-4605 / CBS 113480) (Microsporum canis)).